A 393-amino-acid polypeptide reads, in one-letter code: Acetylornithine aminotransferase (393 aa).

Pyridoxal 5'-phosphate is bound by residues 95-96 and Phe-127; that span reads GA. Residue Arg-130 participates in N(2)-acetyl-L-ornithine binding. 214–217 is a binding site for pyridoxal 5'-phosphate; the sequence is DEVQ. Residue Lys-243 is modified to N6-(pyridoxal phosphate)lysine. Ser-271 lines the N(2)-acetyl-L-ornithine pocket. Thr-272 provides a ligand contact to pyridoxal 5'-phosphate.

It belongs to the class-III pyridoxal-phosphate-dependent aminotransferase family. ArgD subfamily. As to quaternary structure, homodimer. It depends on pyridoxal 5'-phosphate as a cofactor.

The protein resides in the cytoplasm. It carries out the reaction N(2)-acetyl-L-ornithine + 2-oxoglutarate = N-acetyl-L-glutamate 5-semialdehyde + L-glutamate. Its pathway is amino-acid biosynthesis; L-arginine biosynthesis; N(2)-acetyl-L-ornithine from L-glutamate: step 4/4. The sequence is that of Acetylornithine aminotransferase from Nitrosomonas europaea (strain ATCC 19718 / CIP 103999 / KCTC 2705 / NBRC 14298).